The chain runs to 336 residues: Spore photoproduct lyase (336 aa).

One can recognise a Radical SAM core domain in the interval 74 to 305; it reads CKPSANYQLP…KFGQFGYGKY (232 aa). Positions 88, 92, and 95 each coordinate [4Fe-4S] cluster. Positions 215 to 232 form a DNA-binding region, H-T-H motif; the sequence is ESAYNILNSGYKTGFIVG.

It belongs to the radical SAM superfamily. SPL family. In terms of assembly, monomer or homodimer. It depends on [4Fe-4S] cluster as a cofactor. The cofactor is S-adenosyl-L-methionine.

It catalyses the reaction (5R)-5,6-dihydro-5-(thymidin-7-yl)thymidine in DNA = a thymidine dimer in DNA. Functionally, involved in repair of UV radiation-induced DNA damage during spore germination. Can repair thymine dimer 5-thyminyl-5,6-dihydrothymine (known as spore photoproduct (SP)) by in situ monomerization of SP to two thymines. The polypeptide is Spore photoproduct lyase (splB) (Clostridium acetobutylicum (strain ATCC 824 / DSM 792 / JCM 1419 / IAM 19013 / LMG 5710 / NBRC 13948 / NRRL B-527 / VKM B-1787 / 2291 / W)).